The sequence spans 169 residues: UPF0303 protein BMEI0598 (169 aa).

It belongs to the UPF0303 family.

The protein is UPF0303 protein BMEI0598 of Brucella melitensis biotype 1 (strain ATCC 23456 / CCUG 17765 / NCTC 10094 / 16M).